The sequence spans 277 residues: Large ribosomal subunit protein uL2 (277 aa).

Positions 223–277 are disordered; the sequence is VVMNPIDHPHGGGEGRTSGGRHPVTPWGKPTKGKKTRSNKSTNKFILISRHKRKK.

It belongs to the universal ribosomal protein uL2 family. As to quaternary structure, part of the 50S ribosomal subunit. Forms a bridge to the 30S subunit in the 70S ribosome.

Its function is as follows. One of the primary rRNA binding proteins. Required for association of the 30S and 50S subunits to form the 70S ribosome, for tRNA binding and peptide bond formation. It has been suggested to have peptidyltransferase activity; this is somewhat controversial. Makes several contacts with the 16S rRNA in the 70S ribosome. This chain is Large ribosomal subunit protein uL2, found in Nitrobacter hamburgensis (strain DSM 10229 / NCIMB 13809 / X14).